A 230-amino-acid polypeptide reads, in one-letter code: MVPEYSRFYNILGYNFKDYTLLIRALTHRSKTKKNYERLEFLGDSVLSFVIAEVLYKQFIDLAEGKLSQLRSKLVKGATLAQLASSLKMDEYIILGASEQGGHKREKILEDVFEAVIGAIYLDSDFATVKKVILKWYQPIISSINLDTIKVKDSKSKLQEILLQNALSLPEYSIETIDGKDHEQQFTVVAVSKDLNLRVKAQGTSRKKAEQKTAEKMIEMLSQQGLHEKK.

An RNase III domain is found at 5-125 (YSRFYNILGY…VIGAIYLDSD (121 aa)). Glu40 is a binding site for Mg(2+). Asp44 is a catalytic residue. Residues Asp111 and Glu114 each coordinate Mg(2+). Glu114 is an active-site residue. The DRBM domain maps to 153–223 (DSKSKLQEIL…AEKMIEMLSQ (71 aa)).

It belongs to the ribonuclease III family. In terms of assembly, homodimer. It depends on Mg(2+) as a cofactor.

Its subcellular location is the cytoplasm. It carries out the reaction Endonucleolytic cleavage to 5'-phosphomonoester.. In terms of biological role, digests double-stranded RNA. Involved in the processing of primary rRNA transcript to yield the immediate precursors to the large and small rRNAs (23S and 16S). Processes some mRNAs, and tRNAs when they are encoded in the rRNA operon. Processes pre-crRNA and tracrRNA of type II CRISPR loci if present in the organism. This Francisella tularensis subsp. tularensis (strain FSC 198) protein is Ribonuclease 3.